A 151-amino-acid chain; its full sequence is Large ribosomal subunit protein bL9 (151 aa).

The protein belongs to the bacterial ribosomal protein bL9 family.

In terms of biological role, binds to the 23S rRNA. The chain is Large ribosomal subunit protein bL9 from Prochlorococcus marinus (strain MIT 9215).